A 239-amino-acid polypeptide reads, in one-letter code: Lactate utilization protein A 2 (239 aa).

The protein belongs to the LutA/YkgE family.

Functionally, is involved in L-lactate degradation and allows cells to grow with lactate as the sole carbon source. This Bacillus mycoides (strain KBAB4) (Bacillus weihenstephanensis) protein is Lactate utilization protein A 2.